Consider the following 658-residue polypeptide: Aspartate--tRNA ligase, mitochondrial (658 aa).

Glutamate 198 is an L-aspartate binding site. The aspartate stretch occupies residues 226 to 229 (QQYK). Arginine 248 is a binding site for L-aspartate. Residues 248–250 (RDE) and glutamate 553 each bind ATP. Arginine 560 is a binding site for L-aspartate. 604–607 (GFDR) contacts ATP.

Belongs to the class-II aminoacyl-tRNA synthetase family. Type 1 subfamily.

It localises to the mitochondrion matrix. The catalysed reaction is tRNA(Asp) + L-aspartate + ATP = L-aspartyl-tRNA(Asp) + AMP + diphosphate. Catalyzes the attachment of aspartate to tRNA(Asp) in the mitochondrion. In Saccharomyces cerevisiae (strain ATCC 204508 / S288c) (Baker's yeast), this protein is Aspartate--tRNA ligase, mitochondrial (MSD1).